We begin with the raw amino-acid sequence, 301 residues long: Small ribosomal subunit protein uS3 (301 aa).

Positions 39–107 (VREYLKAKLK…PVAVNIEEVR (69 aa)) constitute a KH type-2 domain. Residues 211–301 (GESPGAKLDA…AAAADGTKTE (91 aa)) form a disordered region. Positions 224-244 (DEERKPRGPRRDARPGSDRPA) are enriched in basic and acidic residues. Residues 245-257 (PRGARAPRAPAGG) are compositionally biased toward low complexity.

Belongs to the universal ribosomal protein uS3 family. As to quaternary structure, part of the 30S ribosomal subunit. Forms a tight complex with proteins S10 and S14.

Binds the lower part of the 30S subunit head. Binds mRNA in the 70S ribosome, positioning it for translation. The polypeptide is Small ribosomal subunit protein uS3 (Polaromonas sp. (strain JS666 / ATCC BAA-500)).